Consider the following 90-residue polypeptide: uncharacterized protein (90 aa).

It belongs to the barstar family.

This is an uncharacterized protein from Escherichia coli O157:H7.